A 940-amino-acid chain; its full sequence is Alanine--tRNA ligase (940 aa).

Zn(2+) is bound by residues H581, H585, C683, and H687.

It belongs to the class-II aminoacyl-tRNA synthetase family. Zn(2+) serves as cofactor.

The protein localises to the cytoplasm. It catalyses the reaction tRNA(Ala) + L-alanine + ATP = L-alanyl-tRNA(Ala) + AMP + diphosphate. Its function is as follows. Catalyzes the attachment of alanine to tRNA(Ala) in a two-step reaction: alanine is first activated by ATP to form Ala-AMP and then transferred to the acceptor end of tRNA(Ala). Also edits incorrectly charged Ser-tRNA(Ala) and Gly-tRNA(Ala) via its editing domain. The protein is Alanine--tRNA ligase of Leptospira borgpetersenii serovar Hardjo-bovis (strain L550).